The chain runs to 423 residues: GPI mannosyltransferase 2 (423 aa).

Transmembrane regions (helical) follow at residues I11–G31, W106–L126, L139–P159, Y160–L180, G197–V219, L240–L260, Y299–L319, L351–I371, and G400–L420.

Belongs to the PIGV family.

The protein resides in the endoplasmic reticulum membrane. The protein operates within glycolipid biosynthesis; glycosylphosphatidylinositol-anchor biosynthesis. Functionally, mannosyltransferase involved in glycosylphosphatidylinositol-anchor biosynthesis. Transfers the second mannose to the glycosylphosphatidylinositol during GPI precursor assembly. This Gibberella zeae (strain ATCC MYA-4620 / CBS 123657 / FGSC 9075 / NRRL 31084 / PH-1) (Wheat head blight fungus) protein is GPI mannosyltransferase 2 (GPI18).